The following is a 279-amino-acid chain: Putative colanic acid biosynthesis glycosyl transferase WcaA (279 aa).

To R.meliloti ExoO.

It participates in slime biogenesis; slime polysaccharide biosynthesis. This Escherichia coli (strain K12) protein is Putative colanic acid biosynthesis glycosyl transferase WcaA (wcaA).